The chain runs to 140 residues: ATP synthase epsilon chain (140 aa).

This sequence belongs to the ATPase epsilon chain family. In terms of assembly, F-type ATPases have 2 components, CF(1) - the catalytic core - and CF(0) - the membrane proton channel. CF(1) has five subunits: alpha(3), beta(3), gamma(1), delta(1), epsilon(1). CF(0) has three main subunits: a, b and c.

It localises to the cell inner membrane. Produces ATP from ADP in the presence of a proton gradient across the membrane. The chain is ATP synthase epsilon chain from Neisseria gonorrhoeae (strain ATCC 700825 / FA 1090).